Reading from the N-terminus, the 142-residue chain is Lipoprotein MlpI (142 aa).

The N-terminal stretch at 1–17 (MKIINILFCLFLLMLNS) is a signal peptide. Cysteine 18 carries the N-palmitoyl cysteine lipid modification. A lipid anchor (S-diacylglycerol cysteine) is attached at cysteine 18. The segment at 22–54 (DTNTSQTKSRQKRDLTQKEATQEKPKSKEDLLR) is disordered. Positions 33-54 (KRDLTQKEATQEKPKSKEDLLR) are enriched in basic and acidic residues.

This sequence belongs to the Multicopy lipoprotein (Mlp) family.

It is found in the cell outer membrane. An outer membrane protein that may participate in pathogenesis. Some human Lyme disease patients have antibodies against this protein. The Mlp proteins probably undergo intragenic recombination, generating new alleles. This Borreliella burgdorferi (strain ATCC 35210 / DSM 4680 / CIP 102532 / B31) (Borrelia burgdorferi) protein is Lipoprotein MlpI.